A 249-amino-acid chain; its full sequence is MSAIQRLTGKTAVITGGATGIGFAAAKRFIEEGAFVFIFGRRQEKLDAATAALGPNSRAVQGSVTELADLDRLYEAVKAERGSLDIVMANAGAGMATPLGKITGEQCDIVFGTNLKGTIFTIQGALPLMAQAGGGSIILTGSSSGTTGAPPLSVYGASKAAIRNLARSWAGTLRDEGIRINVLSPASIATEIAKEALGEQGMKMFAQQNPLKRMGQPEEVGAVAAFLASSDSSFMTASEVSVDGGLAQI.

Positions 21, 45, 90, 155, 159, 188, and 190 each coordinate NADP(+). Tyr-155 acts as the Proton acceptor in catalysis. The active-site Lowers pKa of active site Tyr is the Lys-159.

The protein belongs to the short-chain dehydrogenases/reductases (SDR) family.

Its function is as follows. Oxidoreductase; part of the gene cluster that mediates the biosynthesis of xenovulene A, an unusual meroterpenoid that has potent inhibitory effects on the human gamma-aminobutyrate A (GABAA) benzodiazepine receptor. The first step of xenovulene A biosynthesis is the biosynthesis of 3-methylorcinaldehyde performed by the non-reducing polyketide synthase aspks1. The salicylate hydroxylase asL1 then catalyzes the oxidative dearomatization of 3-methylorcinaldehyde to yield a dearomatized hydroxycyclohexadione. The 2-oxoglutarate-dependent dioxygenase asL3 further catalyzes the oxidative ring expansion to provide the first tropolone metabolite. The cytochrome P450 monooxygenase asR2 allows the synthesis of tropolone hemiacetal. In parallel, a previously unrecognised class of terpene cyclase, asR6, produces alpha-humulene from farnesylpyrophosphate (FPP). The putative Diels-Alderase asR5 probably catalyzes the formation of the tropolone-humulene skeleton by linking humulene and the polyketide moiety. Oxidative-ring contractions catalyzed by asL4 and asL6 then processively remove carbon atoms from the polyketide to yield xenovulene A. In Sarocladium schorii (Acremonium strictum (strain IMI 501407)), this protein is Oxidoreductase asL5.